The sequence spans 358 residues: Trace amine-associated receptor 7f (358 aa).

Topologically, residues 1-47 (MSIADETVSWNQDSILSRDLFSATSAELCYENLNRSCVRSPYSPGPR) are extracellular. N-linked (GlcNAc...) asparagine glycosylation occurs at N34. 2 disulfides stabilise this stretch: C37–C201 and C120–C205. Residues 48–68 (LILYAVFGFGAVLAVCGNLLV) traverse the membrane as a helical segment. Residues 69–83 (MTSILHFRQLHSPAN) lie on the Cytoplasmic side of the membrane. Residues 84 to 104 (FLVASLACADFLVGVMVMPFS) traverse the membrane as a helical segment. Residues 105 to 121 (MVRSVEGCWYFGDSYCK) are Extracellular-facing. A helical transmembrane segment spans residues 122-143 (LHTCFDVSFCYCSLFHLCFISV). The Cytoplasmic segment spans residues 144–166 (DRYIAVSDPLAYPTRFTASVSGK). Residues 167–187 (CITFSWLLSISYGFSLIYTGA) form a helical membrane-spanning segment. Over 188–212 (SEAGLEDLVSSLTCVGGCQIAVNQT) the chain is Extracellular. An N-linked (GlcNAc...) asparagine glycan is attached at N210. A helical transmembrane segment spans residues 213–233 (WVFINFSVFLIPTLVMITVYS). Residues 234–274 (KIFLIAKQQAQNIEKMSKQTARASDSYKDRVAKRERKAAKT) are Cytoplasmic-facing. The chain crosses the membrane as a helical span at residues 275 to 295 (LGIAVAAFLLSWLPYFIDSFI). Over 296-309 (DAFLGFITPTYVYE) the chain is Extracellular. The chain crosses the membrane as a helical span at residues 310 to 333 (ILVWIVYYNSAMNPLIYAFFYPWF). Topologically, residues 334 to 358 (RKAIKLTVTGKILRENSSTTNLFSE) are cytoplasmic.

It belongs to the G-protein coupled receptor 1 family. Specifically expressed in neurons of the olfactory epithelium.

The protein resides in the cell membrane. In terms of biological role, olfactory receptor activated by trace amines, such as N-methylpiperidine and N,N-dimethylcyclohexylamine. Trace amine compounds are enriched in animal body fluids and act on trace amine-associated receptors (TAARs) to elicit both intraspecific and interspecific innate behaviors. Ligand-binding causes a conformation change that triggers signaling via G(s)-class of G alpha proteins (GNAL or GNAS). The sequence is that of Trace amine-associated receptor 7f from Mus musculus (Mouse).